We begin with the raw amino-acid sequence, 233 residues long: V-type proton ATPase subunit E (233 aa).

Belongs to the V-ATPase E subunit family. In terms of assembly, V-ATPase is a heteromultimeric enzyme composed of a peripheral catalytic V1 complex (components A to H) attached to an integral membrane V0 proton pore complex (components: a, c, c', c'' and d).

Its function is as follows. Subunit of the peripheral V1 complex of vacuolar ATPase essential for assembly or catalytic function. V-ATPase is responsible for acidifying a variety of intracellular compartments in eukaryotic cells. The polypeptide is V-type proton ATPase subunit E (vatE) (Dictyostelium discoideum (Social amoeba)).